Consider the following 526-residue polypeptide: Neutrophil cytosol factor 2 (526 aa).

TPR repeat units follow at residues 37–70 (SRIC…DKHL), 71–104 (AVAY…LRGN), and 121–154 (CEVL…KSEP). Threonine 233 bears the Phosphothreonine mark. The SH3 1 domain occupies 240 to 299 (LEGEAHRVLFGFVPETKEELQVMPGNIVFVLKKGNDNWATVMFNGQKGLVPCNYLEPVEL). Positions 303–315 (PQQQPQEESSPQS) are enriched in low complexity. Residues 303-346 (PQQQPQEESSPQSDIPAPPSSKAPGRPQLSPGQKQKEEPKEVKL) are disordered. Over residues 336–345 (KQKEEPKEVK) the composition is skewed to basic and acidic residues. Positions 351–429 (PYTLKVHYKY…YCLTLWCENT (79 aa)) constitute a PB1 domain. Serine 399 carries the phosphoserine modification. Residues 433–458 (QGFPDEPKESEKADANNQTTEPQLKK) form a disordered region. Over residues 437 to 446 (DEPKESEKAD) the composition is skewed to basic and acidic residues. One can recognise an SH3 2 domain in the interval 457-516 (KKGSQVEALFSYEATQPEDLEFQEGDIILVLSKVNEEWLEGECKGKVGIFPKVFVEDCAT).

The protein belongs to the NCF2/NOXA1 family. Component of the phagocyte NADPH oxidase complex composed of an obligatory core heterodimer formed by the membrane proteins CYBA and CYBB and the cytosolic regulatory subunits NCF1/p47-phox, NCF2/p67-phox, NCF4/p40-phox and the small GTPase RAC1 or RAC2. Part of a cytosolic complex composed at least by NCF1, NCF2 and NCF4. Interacts with NCF4. Interacts (via the C-terminal SH3 domain) with NCF1 (via C-terminus). Interacts with SYTL1 and RAC1. May interact with NOXO1. Interacts with S100A8 and calprotectin (S100A8/9). Interacts with GBP7 (via GB1/RHD3-type G domain). Interacts with CYBB; the interaction is enhanced in the presence of GBP7.

It is found in the cytoplasm. Subunit of the phagocyte NADPH oxidase complex that mediates the transfer of electrons from cytosolic NADPH to O2 to produce the superoxide anion (O2(-)). In the activated complex, electrons are first transferred from NADPH to flavin adenine dinucleotide (FAD) and subsequently transferred via two heme molecules to molecular oxygen, producing superoxide through an outer-sphere reaction. Activation of the NADPH oxidase complex is initiated by the assembly of cytosolic subunits of the NADPH oxidase complex with the core NADPH oxidase complex to form a complex at the plasma membrane or phagosomal membrane. This activation process is initiated by phosphorylation dependent binding of the cytosolic NCF1/p47-phox subunit to the C-terminus of CYBA/p22-phox. The chain is Neutrophil cytosol factor 2 from Homo sapiens (Human).